The primary structure comprises 240 residues: MKFSIITLFPKIINSYIEESIIKRAINKQAIQIEIIDLRNFSTLNHNQVDDYQYGGGSGMVLMIEPLIKAIESVKTTKSIVLLTTPQGKTLNQSIVKTYSNNYEHIIIVCGHYEGYDERVLDYIDDEISIGDYVITGGELASLILVDSISRLLPNVIKQESYENESFENNLLDHPVYTKPYEFRNKKVPDVLLSGHHQNIKKWREEQQVIKTLKKRPDLIDITKLNKHQLEIYKKMKGEQ.

Residues Gly-111 and 130-135 contribute to the S-adenosyl-L-methionine site; that span reads IGDYVI.

The protein belongs to the RNA methyltransferase TrmD family. Homodimer.

Its subcellular location is the cytoplasm. The enzyme catalyses guanosine(37) in tRNA + S-adenosyl-L-methionine = N(1)-methylguanosine(37) in tRNA + S-adenosyl-L-homocysteine + H(+). In terms of biological role, specifically methylates guanosine-37 in various tRNAs. In Mycoplasma capricolum subsp. capricolum (strain California kid / ATCC 27343 / NCTC 10154), this protein is tRNA (guanine-N(1)-)-methyltransferase.